Consider the following 1259-residue polypeptide: Telomerase reverse transcriptase (1259 aa).

The Reverse transcriptase domain maps to 742-1067 (RGEPRKAVRH…SFMPWSGLLI (326 aa)). Residues aspartate 837, aspartate 999, and aspartate 1000 each contribute to the Mg(2+) site.

It belongs to the reverse transcriptase family. Telomerase subfamily. As to quaternary structure, component of the telomerase ribonucleoprotein complex. As to expression, expressed in shoot apices and immature embryos.

It localises to the nucleus. It is found in the chromosome. Its subcellular location is the telomere. The catalysed reaction is DNA(n) + a 2'-deoxyribonucleoside 5'-triphosphate = DNA(n+1) + diphosphate. Functionally, telomerase is a ribonucleoprotein enzyme essential for the replication of chromosome termini in most eukaryotes. It elongates telomeres. It is a reverse transcriptase that adds simple sequence repeats to chromosome ends by copying a template sequence within the RNA component of the enzyme. This Oryza sativa subsp. japonica (Rice) protein is Telomerase reverse transcriptase (TERT).